Consider the following 362-residue polypeptide: 3-dehydroquinate synthase (362 aa).

Residues 71 to 76, 105 to 109, 129 to 130, K142, K151, and 169 to 172 contribute to the NAD(+) site; these read DGEQYK, GVVGD, TT, and CLKT. 3 residues coordinate Zn(2+): E184, H247, and H264.

Belongs to the sugar phosphate cyclases superfamily. Dehydroquinate synthase family. Co(2+) is required as a cofactor. Requires Zn(2+) as cofactor. NAD(+) serves as cofactor.

Its subcellular location is the cytoplasm. The enzyme catalyses 7-phospho-2-dehydro-3-deoxy-D-arabino-heptonate = 3-dehydroquinate + phosphate. The protein operates within metabolic intermediate biosynthesis; chorismate biosynthesis; chorismate from D-erythrose 4-phosphate and phosphoenolpyruvate: step 2/7. Its function is as follows. Catalyzes the conversion of 3-deoxy-D-arabino-heptulosonate 7-phosphate (DAHP) to dehydroquinate (DHQ). The chain is 3-dehydroquinate synthase from Escherichia coli O6:K15:H31 (strain 536 / UPEC).